An 853-amino-acid chain; its full sequence is Putative dipeptidyl aminopeptidase C14C4.15c (853 aa).

Residues 1-26 (MNAYEGDTLNNHGKSSTRQHWRKRSA) form a disordered region. Residues 1–65 (MNAYEGDTLN…AKKRRRKKHR (65 aa)) are Cytoplasmic-facing. The segment covering 15–25 (SSTRQHWRKRS) has biased composition (basic residues). The helical; Signal-anchor for type II membrane protein transmembrane segment at 66-86 (YIYLAVCLFFLASVLSCAIIF) threads the bilayer. Topologically, residues 87–853 (RFYLHTNREN…SGHFHHALYC (767 aa)) are lumenal. N-linked (GlcNAc...) asparagine glycans are attached at residues Asn-96, Asn-102, Asn-472, Asn-483, and Asn-613. Active-site charge relay system residues include Ser-719, Asp-795, and His-828.

It belongs to the peptidase S9B family.

It is found in the vacuole membrane. This chain is Putative dipeptidyl aminopeptidase C14C4.15c, found in Schizosaccharomyces pombe (strain 972 / ATCC 24843) (Fission yeast).